Here is a 321-residue protein sequence, read N- to C-terminus: Glucokinase (321 aa).

Residue 8–13 (GDVGGT) participates in ATP binding.

Belongs to the bacterial glucokinase family.

It localises to the cytoplasm. It carries out the reaction D-glucose + ATP = D-glucose 6-phosphate + ADP + H(+). This chain is Glucokinase, found in Salmonella schwarzengrund (strain CVM19633).